Reading from the N-terminus, the 356-residue chain is Histidinol-phosphate aminotransferase (356 aa).

Lys214 is subject to N6-(pyridoxal phosphate)lysine.

The protein belongs to the class-II pyridoxal-phosphate-dependent aminotransferase family. Histidinol-phosphate aminotransferase subfamily. In terms of assembly, homodimer. Pyridoxal 5'-phosphate is required as a cofactor.

The enzyme catalyses L-histidinol phosphate + 2-oxoglutarate = 3-(imidazol-4-yl)-2-oxopropyl phosphate + L-glutamate. Its pathway is amino-acid biosynthesis; L-histidine biosynthesis; L-histidine from 5-phospho-alpha-D-ribose 1-diphosphate: step 7/9. In Escherichia coli O8 (strain IAI1), this protein is Histidinol-phosphate aminotransferase.